The sequence spans 340 residues: COP9 signalosome complex subunit 5 (340 aa).

Residues 52–189 form the MPN domain; sequence VRISATALIK…IGAFRTYPAD (138 aa). Residues His-135, His-137, and Asp-148 each contribute to the Zn(2+) site. Residues 135 to 148 carry the JAMM motif motif; it reads HSHPGYGCWLSGID.

It belongs to the peptidase M67A family. CSN5 subfamily. As to quaternary structure, component of the COP9 signalosome (CSN) complex.

It localises to the cytoplasm. Its subcellular location is the nucleus. In terms of biological role, catalytic Component of the COP9 signalosome (CSN) complex that acts as an regulator of the ubiquitin (Ubl) conjugation pathway by mediating the deneddylation of the cullin subunit of SCF-type E3 ubiquitin-protein ligase complexes. This Gibberella zeae (strain ATCC MYA-4620 / CBS 123657 / FGSC 9075 / NRRL 31084 / PH-1) (Wheat head blight fungus) protein is COP9 signalosome complex subunit 5 (RRI1).